Here is a 103-residue protein sequence, read N- to C-terminus: Small ribosomal subunit protein uS10 (103 aa).

It belongs to the universal ribosomal protein uS10 family. Part of the 30S ribosomal subunit.

Involved in the binding of tRNA to the ribosomes. The sequence is that of Small ribosomal subunit protein uS10 from Paraburkholderia xenovorans (strain LB400).